Reading from the N-terminus, the 296-residue chain is Nucleotide-binding protein spyM18_0713 (296 aa).

13 to 20 (GMSGAGKT) contributes to the ATP binding site. A GTP-binding site is contributed by 63-66 (DMRS).

This sequence belongs to the RapZ-like family.

Functionally, displays ATPase and GTPase activities. In Streptococcus pyogenes serotype M18 (strain MGAS8232), this protein is Nucleotide-binding protein spyM18_0713.